A 362-amino-acid polypeptide reads, in one-letter code: Phosphoserine aminotransferase (362 aa).

Residues Ser-9 and Arg-42 each coordinate L-glutamate. Residues 76–77 (GR), Trp-102, Thr-153, Asp-174, and Gln-197 contribute to the pyridoxal 5'-phosphate site. Lys-198 carries the N6-(pyridoxal phosphate)lysine modification. Residue 239–240 (NT) coordinates pyridoxal 5'-phosphate.

It belongs to the class-V pyridoxal-phosphate-dependent aminotransferase family. SerC subfamily. As to quaternary structure, homodimer. The cofactor is pyridoxal 5'-phosphate.

It is found in the cytoplasm. The enzyme catalyses O-phospho-L-serine + 2-oxoglutarate = 3-phosphooxypyruvate + L-glutamate. It catalyses the reaction 4-(phosphooxy)-L-threonine + 2-oxoglutarate = (R)-3-hydroxy-2-oxo-4-phosphooxybutanoate + L-glutamate. The protein operates within amino-acid biosynthesis; L-serine biosynthesis; L-serine from 3-phospho-D-glycerate: step 2/3. It participates in cofactor biosynthesis; pyridoxine 5'-phosphate biosynthesis; pyridoxine 5'-phosphate from D-erythrose 4-phosphate: step 3/5. Catalyzes the reversible conversion of 3-phosphohydroxypyruvate to phosphoserine and of 3-hydroxy-2-oxo-4-phosphonooxybutanoate to phosphohydroxythreonine. This chain is Phosphoserine aminotransferase, found in Klebsiella pneumoniae (strain 342).